Consider the following 154-residue polypeptide: Cyanate hydratase (154 aa).

Catalysis depends on residues Arg100, Glu103, and Ser126.

Belongs to the cyanase family.

The enzyme catalyses cyanate + hydrogencarbonate + 3 H(+) = NH4(+) + 2 CO2. Catalyzes the reaction of cyanate with bicarbonate to produce ammonia and carbon dioxide. The polypeptide is Cyanate hydratase (Aspergillus terreus (strain NIH 2624 / FGSC A1156)).